Consider the following 551-residue polypeptide: MRAKKQLLAALQDIVKDMGLAWPEKATIDTPKATGFGDLAANIALVLAKQAGQNPRELATRIADALRNRDADITAIDIAGPGFLNVTYSQDFWRETILRAQEAGSAFGSSDTGAGRKVQVEYVSANPTGPLHIGHGRGAAVGDSLARIMRFAGYDVSTEYYINDAGRQMRLLGLSVWVRAKELAGRPVTLPEDFYRGDYIKDIARELMEKEPGLLDLDDAAGEDRCFAYAMNSILDGIKQDLADFRVEHQVWFSERSLVEGGAVEKTFNRLKEAGLAFEQDGALWFRTTDFGDDKDRVLRKSDGTLTYFSSDIAYHDNKYDRGFDLVVDIWGADHHGYIPRMRAAVAALGRKPEAFDVVLIQLVNLLRGGELVAMSTRAGQFETLADVVKETGADAARFMFLSRKSDSPLDFDLELVKQRTMDNPVYYVQYAHARVCSVLRKAAERGIEMPAQLDGASLAPLSGDDEMELLRLLDRFEETVAGAATALAPHHISHYLMEVAGALHSYYARQPILNATEQDVIVPRLALLRAVGCVLANGLSLLGVSAPESM.

A 'HIGH' region motif is present at residues 125–135 (ANPTGPLHIGH).

It belongs to the class-I aminoacyl-tRNA synthetase family. In terms of assembly, monomer.

Its subcellular location is the cytoplasm. It catalyses the reaction tRNA(Arg) + L-arginine + ATP = L-arginyl-tRNA(Arg) + AMP + diphosphate. In Nitratidesulfovibrio vulgaris (strain DP4) (Desulfovibrio vulgaris), this protein is Arginine--tRNA ligase.